The chain runs to 83 residues: Arminin 4364 (83 aa).

An N-terminal signal peptide occupies residues 1-18 (MKTVFAILFLAFIALTYA). The propeptide occupies 19-55 (RSYEDVKEEIKNEVEKEILEDLEKETDELNERKINDA). At Val-80 the chain carries Valine amide.

It belongs to the arminin family. As to expression, expressed in entodermal epithelium along the body column.

It localises to the secreted. Its subcellular location is the target cell membrane. Antimicrobial peptide with a broad-spectrum antimicrobial activity. Keeps its antibacterial activity under a wide range of salt concentrations that mimic physiological conditions of human blood, which is surprising, since Hydra is an obligate freshwater animal with nearly no salt tolerance. Does not affect red blood cells. This is Arminin 4364 from Hydra vulgaris (Hydra).